A 320-amino-acid polypeptide reads, in one-letter code: ATP-dependent 6-phosphofructokinase (320 aa).

Position 12 (Gly-12) interacts with ATP. 22-26 (RGVVR) is a binding site for ADP. ATP-binding positions include 73 to 74 (RF) and 103 to 106 (GDGS). Asp-104 is a binding site for Mg(2+). 126-128 (TID) is a binding site for substrate. Asp-128 serves as the catalytic Proton acceptor. Arg-155 contributes to the ADP binding site. Substrate is bound by residues Arg-163 and 170–172 (MGR). Residues 186–188 (GCE), Lys-212, and 214–216 (KKH) each bind ADP. Substrate is bound by residues Glu-223, Arg-244, and 250 to 253 (HIQR).

Belongs to the phosphofructokinase type A (PFKA) family. ATP-dependent PFK group I subfamily. Prokaryotic clade 'B1' sub-subfamily. In terms of assembly, homotetramer. The cofactor is Mg(2+).

It is found in the cytoplasm. It catalyses the reaction beta-D-fructose 6-phosphate + ATP = beta-D-fructose 1,6-bisphosphate + ADP + H(+). It functions in the pathway carbohydrate degradation; glycolysis; D-glyceraldehyde 3-phosphate and glycerone phosphate from D-glucose: step 3/4. Allosterically activated by ADP and other diphosphonucleosides, and allosterically inhibited by phosphoenolpyruvate. In terms of biological role, catalyzes the phosphorylation of D-fructose 6-phosphate to fructose 1,6-bisphosphate by ATP, the first committing step of glycolysis. The protein is ATP-dependent 6-phosphofructokinase of Vibrio parahaemolyticus serotype O3:K6 (strain RIMD 2210633).